The chain runs to 115 residues: Mediator of RNA polymerase II transcription subunit 22 (115 aa).

The protein belongs to the Mediator complex subunit 22 family. As to quaternary structure, component of the Mediator complex.

The protein localises to the nucleus. Component of the Mediator complex, a coactivator involved in the regulated transcription of nearly all RNA polymerase II-dependent genes. Mediator functions as a bridge to convey information from gene-specific regulatory proteins to the basal RNA polymerase II transcription machinery. Mediator is recruited to promoters by direct interactions with regulatory proteins and serves as a scaffold for the assembly of a functional preinitiation complex with RNA polymerase II and the general transcription factors. This is Mediator of RNA polymerase II transcription subunit 22 (SRB6) from Candida albicans (strain SC5314 / ATCC MYA-2876) (Yeast).